The chain runs to 347 residues: Zinc-type alcohol dehydrogenase-like protein C16A3.02c (347 aa).

It belongs to the zinc-containing alcohol dehydrogenase family. Quinone oxidoreductase subfamily.

The protein localises to the golgi apparatus. It localises to the endoplasmic reticulum. The chain is Zinc-type alcohol dehydrogenase-like protein C16A3.02c from Schizosaccharomyces pombe (strain 972 / ATCC 24843) (Fission yeast).